A 64-amino-acid chain; its full sequence is Temporin-ALd (64 aa).

The N-terminal stretch at Met-1–Cys-22 is a signal peptide. Positions Glu-23 to Arg-46 are excised as a propeptide. Leu-62 is modified (leucine amide).

In terms of tissue distribution, expressed by the skin glands.

It is found in the secreted. Antimicrobial peptide with activity against Gram-positive and Gram-negative bacteria and against fungi. Has been tested against S.aureus (MIC=1.25 ug/mL), B.pumilus (MIC=2.5 ug/mL), B.cereus (MIC=15.0 ug/mL), E.coli (MIC=1.25 ug/mL), B.dysenteriae (MIC=5.0 ug/mL), A.cacoaceticus (MIC=15.0 ug/mL), P.aeruginosa (MIC=5.0 ug/mL) and C.albicans (MIC=1.25 ug/mL). Also shows a weak hemolytic activity. The protein is Temporin-ALd of Amolops loloensis (Lolokou Sucker Frog).